The following is a 159-amino-acid chain: Ribosomal RNA large subunit methyltransferase H (159 aa).

Residues leucine 76, glycine 108, and 127–132 (LSKMTY) contribute to the S-adenosyl-L-methionine site.

It belongs to the RNA methyltransferase RlmH family. Homodimer.

Its subcellular location is the cytoplasm. The enzyme catalyses pseudouridine(1915) in 23S rRNA + S-adenosyl-L-methionine = N(3)-methylpseudouridine(1915) in 23S rRNA + S-adenosyl-L-homocysteine + H(+). Functionally, specifically methylates the pseudouridine at position 1915 (m3Psi1915) in 23S rRNA. The chain is Ribosomal RNA large subunit methyltransferase H from Ruminiclostridium cellulolyticum (strain ATCC 35319 / DSM 5812 / JCM 6584 / H10) (Clostridium cellulolyticum).